A 256-amino-acid chain; its full sequence is Thiazole synthase (256 aa).

Lysine 95 functions as the Schiff-base intermediate with DXP in the catalytic mechanism. Residues glycine 156, 182 to 183, and 204 to 205 each bind 1-deoxy-D-xylulose 5-phosphate; these read AG and NT.

It belongs to the ThiG family. As to quaternary structure, homotetramer. Forms heterodimers with either ThiH or ThiS.

The protein resides in the cytoplasm. The enzyme catalyses [ThiS sulfur-carrier protein]-C-terminal-Gly-aminoethanethioate + 2-iminoacetate + 1-deoxy-D-xylulose 5-phosphate = [ThiS sulfur-carrier protein]-C-terminal Gly-Gly + 2-[(2R,5Z)-2-carboxy-4-methylthiazol-5(2H)-ylidene]ethyl phosphate + 2 H2O + H(+). It participates in cofactor biosynthesis; thiamine diphosphate biosynthesis. Its function is as follows. Catalyzes the rearrangement of 1-deoxy-D-xylulose 5-phosphate (DXP) to produce the thiazole phosphate moiety of thiamine. Sulfur is provided by the thiocarboxylate moiety of the carrier protein ThiS. In vitro, sulfur can be provided by H(2)S. In Escherichia coli O45:K1 (strain S88 / ExPEC), this protein is Thiazole synthase.